Consider the following 252-residue polypeptide: MVDPLCNYNVLESIFSYLELNDLNRCSQVCKSWYHFLNDENSDVWRWHCLRKLPKEAVKSDLLSSVTTYKTKLRAYLHAWSPNDCSRNVYVKPNGFTLHRNPVAQSTDAARGKIGFRHGRHAWEVIWEGPLGTVAVIGISTKEAALQCHGYVALLGSDDQSWGWNLVENHLLHNGDTQGSYPLLNNAPKYQVGERIRVILDCDDNTLSFEKNYEFLGVAFRGLPDKKLYPTVSAVYGNTEVSMVYLGTPLDG.

The F-box domain occupies 1–48 (MVDPLCNYNVLESIFSYLELNDLNRCSQVCKSWYHFLNDENSDVWRWH). Residues 58-250 (VKSDLLSSVT…VSMVYLGTPL (193 aa)) form the B30.2/SPRY domain.

The protein belongs to the FBXO45/Fsn family. Component of an E3 ubiquitin ligase complex composed of hiw and Fsn.

It localises to the synapse. It functions in the pathway protein modification; protein ubiquitination. In terms of biological role, required in the presynaptic motoneuron to down-regulate the levels of wnd and restrain synaptic terminal growth at the neuromuscular junction (NMJ). In Drosophila grimshawi (Hawaiian fruit fly), this protein is F-box/SPRY domain-containing protein 1.